A 293-amino-acid chain; its full sequence is tRNA-cytidine(32) 2-sulfurtransferase (293 aa).

The short motif at 62–67 (SGGKDS) is the PP-loop motif element. Positions 137, 140, and 228 each coordinate [4Fe-4S] cluster.

The protein belongs to the TtcA family. As to quaternary structure, homodimer. Mg(2+) serves as cofactor. Requires [4Fe-4S] cluster as cofactor.

The protein localises to the cytoplasm. It carries out the reaction cytidine(32) in tRNA + S-sulfanyl-L-cysteinyl-[cysteine desulfurase] + AH2 + ATP = 2-thiocytidine(32) in tRNA + L-cysteinyl-[cysteine desulfurase] + A + AMP + diphosphate + H(+). It participates in tRNA modification. Catalyzes the ATP-dependent 2-thiolation of cytidine in position 32 of tRNA, to form 2-thiocytidine (s(2)C32). The sulfur atoms are provided by the cysteine/cysteine desulfurase (IscS) system. The protein is tRNA-cytidine(32) 2-sulfurtransferase of Brucella suis (strain ATCC 23445 / NCTC 10510).